Here is a 274-residue protein sequence, read N- to C-terminus: 4-deoxy-L-threo-5-hexosulose-uronate ketol-isomerase (274 aa).

The Zn(2+) site is built by His-192, His-194, Glu-199, and His-241.

Belongs to the KduI family. The cofactor is Zn(2+).

The enzyme catalyses 5-dehydro-4-deoxy-D-glucuronate = 3-deoxy-D-glycero-2,5-hexodiulosonate. Its pathway is glycan metabolism; pectin degradation; 2-dehydro-3-deoxy-D-gluconate from pectin: step 4/5. Catalyzes the isomerization of 5-dehydro-4-deoxy-D-glucuronate to 3-deoxy-D-glycero-2,5-hexodiulosonate. In Agrobacterium fabrum (strain C58 / ATCC 33970) (Agrobacterium tumefaciens (strain C58)), this protein is 4-deoxy-L-threo-5-hexosulose-uronate ketol-isomerase.